The following is a 163-amino-acid chain: Probable ribosome biogenesis protein RLP24 (163 aa).

Belongs to the eukaryotic ribosomal protein eL24 family. As to quaternary structure, associated with nucleolar and cytoplasmic pre-60S particles. At the end of biogenesis it dissociates from cytoplasmic pre-60S particles and is likely to be exchanged for its ribosomal homolog, RPL24.

Its subcellular location is the nucleus. It localises to the nucleolus. In terms of biological role, involved in the biogenesis of the 60S ribosomal subunit. Ensures the docking of GTPBP4/NOG1 to pre-60S particles. In Mus musculus (Mouse), this protein is Probable ribosome biogenesis protein RLP24 (Rsl24d1).